The chain runs to 588 residues: Protein disulfide-isomerase-like protein of the testis (588 aa).

A signal peptide spans 1–20 (MELLWTPLLLVAACLSEVLG). 3 N-linked (GlcNAc...) asparagine glycosylation sites follow: N55, N157, and N337. The 64-residue stretch at 385–448 (PVKKLVGKNF…IAKIDITAND (64 aa)) folds into the Thioredoxin domain. 3 stretches are compositionally biased toward basic and acidic residues: residues 531 to 542 (IEDTSKQDRPVK), 549 to 567 (SIRK…EREA), and 574 to 588 (EQPK…KEEL). The disordered stretch occupies residues 531–588 (IEDTSKQDRPVKESPVLDSIRKPEEPERRKETAEREAAAAQPKEQPKPERKLEVKEEL). Positions 585–588 (KEEL) match the Prevents secretion from ER motif.

It belongs to the protein disulfide isomerase family. As to quaternary structure, homodimer. The homodimer is not disulfide-linked. Interacts with CLGN and ERO1A. Post-translationally, N-glycosylated. In terms of tissue distribution, testis-specific (at protein level).

It localises to the endoplasmic reticulum. Its function is as follows. Probable redox-inactive chaperone involved in spermatogenesis. This is Protein disulfide-isomerase-like protein of the testis (Pdilt) from Mus musculus (Mouse).